The primary structure comprises 512 residues: CaM kinase-like vesicle-associated protein (512 aa).

Residues 24 to 286 (YDLGQVIKTE…AEEAISHEWI (263 aa)) form the Protein kinase domain. The segment at 328 to 347 (APEQSGTAATQSASDAATPG) is disordered. Positions 332–347 (SGTAATQSASDAATPG) are enriched in low complexity. At Ser392 the chain carries Phosphoserine. The interval 393–512 (ADRSATPATD…AQESQRVETS (120 aa)) is disordered. Residues 398 to 439 (TPATDGSATPATDGSVTPATDGSITPATDGSVTPATDRSATP) are compositionally biased toward polar residues. At Thr446 the chain carries Phosphothreonine. The span at 449–460 (TEESTVPATQSS) shows a compositional bias: polar residues. The span at 461 to 478 (ALPAAKAAATPEPAVAQP) shows a compositional bias: low complexity. Thr470 carries the phosphothreonine modification.

It belongs to the protein kinase superfamily. CAMK Ser/Thr protein kinase family. In terms of assembly, interacts with calmodulin, in the presence of calcium. It depends on Ca(2+) as a cofactor.

It is found in the cell membrane. Its subcellular location is the cytoplasmic vesicle membrane. Its function is as follows. Does not appear to have detectable kinase activity. In Mus musculus (Mouse), this protein is CaM kinase-like vesicle-associated protein (Camkv).